The primary structure comprises 273 residues: Putative pyruvate, phosphate dikinase regulatory protein (273 aa).

153-160 contributes to the ADP binding site; that stretch reads GISRTSKT.

It belongs to the pyruvate, phosphate/water dikinase regulatory protein family. PDRP subfamily.

It carries out the reaction N(tele)-phospho-L-histidyl/L-threonyl-[pyruvate, phosphate dikinase] + ADP = N(tele)-phospho-L-histidyl/O-phospho-L-threonyl-[pyruvate, phosphate dikinase] + AMP + H(+). The enzyme catalyses N(tele)-phospho-L-histidyl/O-phospho-L-threonyl-[pyruvate, phosphate dikinase] + phosphate + H(+) = N(tele)-phospho-L-histidyl/L-threonyl-[pyruvate, phosphate dikinase] + diphosphate. Functionally, bifunctional serine/threonine kinase and phosphorylase involved in the regulation of the pyruvate, phosphate dikinase (PPDK) by catalyzing its phosphorylation/dephosphorylation. This Rhizobium etli (strain ATCC 51251 / DSM 11541 / JCM 21823 / NBRC 15573 / CFN 42) protein is Putative pyruvate, phosphate dikinase regulatory protein.